We begin with the raw amino-acid sequence, 224 residues long: Cytidylate kinase (224 aa).

Glycine 9–threonine 17 provides a ligand contact to ATP.

It belongs to the cytidylate kinase family. Type 1 subfamily.

The protein resides in the cytoplasm. The enzyme catalyses CMP + ATP = CDP + ADP. It catalyses the reaction dCMP + ATP = dCDP + ADP. The polypeptide is Cytidylate kinase (Saccharophagus degradans (strain 2-40 / ATCC 43961 / DSM 17024)).